The sequence spans 160 residues: Small ribosomal subunit protein uS9 (160 aa).

Belongs to the universal ribosomal protein uS9 family.

This chain is Small ribosomal subunit protein uS9, found in Mesorhizobium japonicum (strain LMG 29417 / CECT 9101 / MAFF 303099) (Mesorhizobium loti (strain MAFF 303099)).